Here is a 949-residue protein sequence, read N- to C-terminus: Translation initiation factor IF-2 (949 aa).

Disordered regions lie at residues Leu46–Ala82, Glu145–Ser176, and Ile188–Leu361. The segment covering Ala152–Val162 has biased composition (low complexity). Pro residues predominate over residues Pro163–Pro172. Residues Pro263–Pro276 are compositionally biased toward low complexity. Residues Ser334 to His344 show a composition bias toward basic and acidic residues. A tr-type G domain is found at Glu449–Lys618. The tract at residues Gly458–Thr465 is G1. Gly458 to Thr465 contacts GTP. Residues Gly483–His487 are G2. The G3 stretch occupies residues Asp504 to Gly507. Residues Asp504 to His508 and Asn558 to Asp561 contribute to the GTP site. The interval Asn558–Asp561 is G4. A G5 region spans residues Ser594–Lys596.

The protein belongs to the TRAFAC class translation factor GTPase superfamily. Classic translation factor GTPase family. IF-2 subfamily.

It localises to the cytoplasm. Its function is as follows. One of the essential components for the initiation of protein synthesis. Protects formylmethionyl-tRNA from spontaneous hydrolysis and promotes its binding to the 30S ribosomal subunits. Also involved in the hydrolysis of GTP during the formation of the 70S ribosomal complex. The protein is Translation initiation factor IF-2 of Trichlorobacter lovleyi (strain ATCC BAA-1151 / DSM 17278 / SZ) (Geobacter lovleyi).